The primary structure comprises 64 residues: uncharacterized protein (64 aa).

Residues 30–52 traverse the membrane as a helical segment; it reads FYAIFEMLFWPLVSLISVGLLGE.

The protein localises to the membrane. This is an uncharacterized protein from Archaeoglobus fulgidus (strain ATCC 49558 / DSM 4304 / JCM 9628 / NBRC 100126 / VC-16).